Reading from the N-terminus, the 211-residue chain is 3-demethoxyubiquinol 3-hydroxylase (211 aa).

The Fe cation site is built by Glu60, Glu90, His93, Glu142, Glu174, and His177.

Belongs to the COQ7 family. Fe cation serves as cofactor.

It is found in the cell membrane. The catalysed reaction is a 5-methoxy-2-methyl-3-(all-trans-polyprenyl)benzene-1,4-diol + AH2 + O2 = a 3-demethylubiquinol + A + H2O. The protein operates within cofactor biosynthesis; ubiquinone biosynthesis. Catalyzes the hydroxylation of 2-nonaprenyl-3-methyl-6-methoxy-1,4-benzoquinol during ubiquinone biosynthesis. This chain is 3-demethoxyubiquinol 3-hydroxylase, found in Francisella tularensis subsp. holarctica (strain FTNF002-00 / FTA).